A 230-amino-acid polypeptide reads, in one-letter code: 3-beta-hydroxysteroid-Delta(8),Delta(7)-isomerase (230 aa).

Threonine 2 carries the N-acetylthreonine modification. 4 helical membrane-spanning segments follow: residues 29–49 (SHIL…TWLL), 66–86 (LCWF…FSLY), 121–141 (METV…IAFL), and 185–205 (FWFY…ILVL). Positions 61–204 (GRRLALCWFA…VWLVIPSILV (144 aa)) constitute an EXPERA domain.

The protein belongs to the EBP family.

The protein localises to the endoplasmic reticulum membrane. It localises to the nucleus envelope. It is found in the cytoplasmic vesicle. It carries out the reaction lathosterol = 5alpha-cholest-8-en-3beta-ol. It catalyses the reaction zymosterol = 5alpha-cholesta-7,24-dien-3beta-ol. The enzyme catalyses 5,6alpha-epoxy-5alpha-cholestan-3beta-ol + H2O = 5alpha-cholestane-3beta,5,6beta-triol. The catalysed reaction is 5,6beta-epoxy-5beta-cholestan-3beta-ol + H2O = 5alpha-cholestane-3beta,5,6beta-triol. It functions in the pathway steroid biosynthesis; cholesterol biosynthesis. In terms of biological role, isomerase that catalyzes the conversion of Delta(8)-sterols to their corresponding Delta(7)-isomers. Component of the microsomal antiestrogen binding site (AEBS), a multiproteic complex at the ER membrane that consists of an association between EBP and 7-dehydrocholesterol reductase/DHCR7. This complex is responsible for cholesterol-5,6-epoxide hydrolase (ChEH) activity, which consists in the hydration of cholesterol-5,6-epoxides (5,6-EC) into cholestane-3beta,5alpha,6beta-triol (CT). The precise role of each component of this complex has not been described yet. This chain is 3-beta-hydroxysteroid-Delta(8),Delta(7)-isomerase, found in Mus musculus (Mouse).